We begin with the raw amino-acid sequence, 283 residues long: ATP synthase gamma chain (283 aa).

The protein belongs to the ATPase gamma chain family. As to quaternary structure, F-type ATPases have 2 components, CF(1) - the catalytic core - and CF(0) - the membrane proton channel. CF(1) has five subunits: alpha(3), beta(3), gamma(1), delta(1), epsilon(1). CF(0) has three main subunits: a, b and c.

The protein localises to the cell membrane. Its function is as follows. Produces ATP from ADP in the presence of a proton gradient across the membrane. The gamma chain is believed to be important in regulating ATPase activity and the flow of protons through the CF(0) complex. In Clostridium beijerinckii (strain ATCC 51743 / NCIMB 8052) (Clostridium acetobutylicum), this protein is ATP synthase gamma chain.